We begin with the raw amino-acid sequence, 442 residues long: Tubulin beta chain (442 aa).

Residues Gln11, Glu69, Ser138, Gly142, Thr143, Gly144, Asn204, and Asn226 each coordinate GTP. Glu69 is a Mg(2+) binding site.

The protein belongs to the tubulin family. As to quaternary structure, dimer of alpha and beta chains. A typical microtubule is a hollow water-filled tube with an outer diameter of 25 nm and an inner diameter of 15 nM. Alpha-beta heterodimers associate head-to-tail to form protofilaments running lengthwise along the microtubule wall with the beta-tubulin subunit facing the microtubule plus end conferring a structural polarity. Microtubules usually have 13 protofilaments but different protofilament numbers can be found in some organisms and specialized cells. Mg(2+) serves as cofactor.

It localises to the cytoplasm. Its subcellular location is the cytoskeleton. In terms of biological role, tubulin is the major constituent of microtubules, a cylinder consisting of laterally associated linear protofilaments composed of alpha- and beta-tubulin heterodimers. Microtubules grow by the addition of GTP-tubulin dimers to the microtubule end, where a stabilizing cap forms. Below the cap, tubulin dimers are in GDP-bound state, owing to GTPase activity of alpha-tubulin. The protein is Tubulin beta chain of Trypanosoma cruzi.